The chain runs to 170 residues: Small ribosomal subunit protein uS5 (170 aa).

Positions 13–76 constitute an S5 DRBM domain; sequence LLEKLVGVRR…ENARKNMISV (64 aa).

Belongs to the universal ribosomal protein uS5 family. As to quaternary structure, part of the 30S ribosomal subunit. Contacts proteins S4 and S8.

Its function is as follows. With S4 and S12 plays an important role in translational accuracy. Located at the back of the 30S subunit body where it stabilizes the conformation of the head with respect to the body. In Nitrosococcus oceani (strain ATCC 19707 / BCRC 17464 / JCM 30415 / NCIMB 11848 / C-107), this protein is Small ribosomal subunit protein uS5.